The sequence spans 131 residues: Small ribosomal subunit protein bS6 (131 aa).

Residues 98–131 (EASPMARARDERDSRRGPAGERSYDEAHAEEIGE) form a disordered region. A compositionally biased stretch (basic and acidic residues) spans 104 to 131 (RARDERDSRRGPAGERSYDEAHAEEIGE).

The protein belongs to the bacterial ribosomal protein bS6 family.

Binds together with bS18 to 16S ribosomal RNA. This Shewanella putrefaciens (strain CN-32 / ATCC BAA-453) protein is Small ribosomal subunit protein bS6.